Here is a 159-residue protein sequence, read N- to C-terminus: Ankyrin repeat domain-containing protein 37 (159 aa).

ANK repeat units lie at residues 1-25 (MLLL…SVNA), 30-59 (QEQS…DLNQ), and 63-92 (LGET…QIGV). A Nuclear localization signal motif is present at residues 130 to 150 (EQQERDPRAPVLRQKRSFRTV).

Post-translationally, ubiquitinated by the CRL2(FEM1B) complex, leading to its degradation. In terms of tissue distribution, expressed testis, ovary, uterus, kidney, liver, but not in other tissues.

It localises to the nucleus. The protein resides in the cytoplasm. The polypeptide is Ankyrin repeat domain-containing protein 37 (Mus musculus (Mouse)).